A 134-amino-acid polypeptide reads, in one-letter code: Kinetochore-binding protein 3 (134 aa).

It is found in the nucleus. The protein localises to the chromosome. Its subcellular location is the centromere. The protein resides in the kinetochore. This Caenorhabditis elegans protein is Kinetochore-binding protein 3 (kbp-3).